The chain runs to 388 residues: Succinate--CoA ligase [ADP-forming] subunit beta (388 aa).

The ATP-grasp domain occupies 9–244 (KQLFAEYGLP…PSQEDEREAH (236 aa)). Residues lysine 46, 53-55 (GRG), glutamate 99, threonine 102, and glutamate 107 contribute to the ATP site. Mg(2+)-binding residues include asparagine 199 and aspartate 213. Residues asparagine 264 and 321–323 (GIV) each bind substrate.

This sequence belongs to the succinate/malate CoA ligase beta subunit family. Heterotetramer of two alpha and two beta subunits. Mg(2+) is required as a cofactor.

The catalysed reaction is succinate + ATP + CoA = succinyl-CoA + ADP + phosphate. It catalyses the reaction GTP + succinate + CoA = succinyl-CoA + GDP + phosphate. It functions in the pathway carbohydrate metabolism; tricarboxylic acid cycle; succinate from succinyl-CoA (ligase route): step 1/1. Functionally, succinyl-CoA synthetase functions in the citric acid cycle (TCA), coupling the hydrolysis of succinyl-CoA to the synthesis of either ATP or GTP and thus represents the only step of substrate-level phosphorylation in the TCA. The beta subunit provides nucleotide specificity of the enzyme and binds the substrate succinate, while the binding sites for coenzyme A and phosphate are found in the alpha subunit. The chain is Succinate--CoA ligase [ADP-forming] subunit beta from Colwellia psychrerythraea (strain 34H / ATCC BAA-681) (Vibrio psychroerythus).